A 185-amino-acid chain; its full sequence is Ribosome-recycling factor (185 aa).

The segment at 137–166 (DGLKKAEKDGDIGQDESRGQSEKVQKMTDD) is disordered.

This sequence belongs to the RRF family.

The protein localises to the cytoplasm. Its function is as follows. Responsible for the release of ribosomes from messenger RNA at the termination of protein biosynthesis. May increase the efficiency of translation by recycling ribosomes from one round of translation to another. The chain is Ribosome-recycling factor from Agrobacterium fabrum (strain C58 / ATCC 33970) (Agrobacterium tumefaciens (strain C58)).